Consider the following 781-residue polypeptide: Chloride channel protein CLC-f (781 aa).

Disordered regions lie at residues 1-41 and 79-98; these read MSSG…QSPA and RERH…EEDG. Residues 10–20 are compositionally biased toward basic and acidic residues; the sequence is NEDRHLLRSTD. Helical transmembrane passes span 129–149, 184–204, 221–241, 250–270, 279–299, 314–334, 350–370, 388–408, 433–453, 457–477, 502–522, and 523–543; these read WALL…VAGF, ILLI…LLEI, FLAG…LGTG, SVDI…NNRE, GAAS…FFAI, FTTA…NALL, AAEL…SVVF, FGLP…IIAL, APGI…TALC, GLVG…GAVF, ALVG…TSVL, and LLFE…AVGL. The tract at residues 553 to 584 is disordered; it reads QGKESDSSEGRSTGRGYSSLSPSERKTEGVWR. Residues 575–584 show a composition bias toward basic and acidic residues; it reads SERKTEGVWR. 2 consecutive CBS domains span residues 621-677 and 699-763; these read MSKN…NAST and QERG…EMSR. A helical transmembrane segment spans residues 726-746; sequence QLPVVKRGEVIHKGKRRKLLG.

It belongs to the chloride channel (TC 2.A.49) family. In terms of assembly, homodimer.

The protein localises to the membrane. Voltage-gated chloride channel. The sequence is that of Chloride channel protein CLC-f (CLC-F) from Arabidopsis thaliana (Mouse-ear cress).